We begin with the raw amino-acid sequence, 341 residues long: Elongation factor Ts, mitochondrial 2 (341 aa).

Residues 1 to 17 (MLAARFASRAFPRTRLY) constitute a mitochondrion transit peptide.

Belongs to the EF-Ts family.

The protein resides in the mitochondrion. Functionally, associates with the EF-Tu.GDP complex and induces the exchange of GDP to GTP. It remains bound to the aminoacyl-tRNA.EF-Tu.GTP complex up to the GTP hydrolysis stage on the ribosome. This Postia placenta (strain ATCC 44394 / Madison 698-R) (Brown rot fungus) protein is Elongation factor Ts, mitochondrial 2.